Reading from the N-terminus, the 570-residue chain is Proline--tRNA ligase (570 aa).

Belongs to the class-II aminoacyl-tRNA synthetase family. ProS type 1 subfamily. Homodimer.

It localises to the cytoplasm. The catalysed reaction is tRNA(Pro) + L-proline + ATP = L-prolyl-tRNA(Pro) + AMP + diphosphate. In terms of biological role, catalyzes the attachment of proline to tRNA(Pro) in a two-step reaction: proline is first activated by ATP to form Pro-AMP and then transferred to the acceptor end of tRNA(Pro). As ProRS can inadvertently accommodate and process non-cognate amino acids such as alanine and cysteine, to avoid such errors it has two additional distinct editing activities against alanine. One activity is designated as 'pretransfer' editing and involves the tRNA(Pro)-independent hydrolysis of activated Ala-AMP. The other activity is designated 'posttransfer' editing and involves deacylation of mischarged Ala-tRNA(Pro). The misacylated Cys-tRNA(Pro) is not edited by ProRS. The polypeptide is Proline--tRNA ligase (Neisseria gonorrhoeae (strain ATCC 700825 / FA 1090)).